The sequence spans 136 residues: Ribonuclease P protein component (136 aa).

This sequence belongs to the RnpA family. In terms of assembly, consists of a catalytic RNA component (M1 or rnpB) and a protein subunit.

It catalyses the reaction Endonucleolytic cleavage of RNA, removing 5'-extranucleotides from tRNA precursor.. Functionally, RNaseP catalyzes the removal of the 5'-leader sequence from pre-tRNA to produce the mature 5'-terminus. It can also cleave other RNA substrates such as 4.5S RNA. The protein component plays an auxiliary but essential role in vivo by binding to the 5'-leader sequence and broadening the substrate specificity of the ribozyme. The sequence is that of Ribonuclease P protein component from Burkholderia mallei (strain NCTC 10247).